Here is a 315-residue protein sequence, read N- to C-terminus: Calumenin (315 aa).

Residues 1-19 (MDTRRLLLCLCLWVACVVS) form the signal peptide. 6 consecutive EF-hand domains span residues 68 to 103 (ESKE…AQKK), 104 to 139 (YVYD…TYLD), 151 to 186 (QMMV…EEFD), 188 to 223 (MKDI…HDGD), 229 to 264 (WVKT…SDYD), and 265 to 300 (HAEA…FVGS). Residues D81, D83, D85, Y87, E92, D117, N119, D121, and E128 each contribute to the Ca(2+) site. An N-linked (GlcNAc...) asparagine glycan is attached at N131. Residues D164, D166, D168, E175, D201, N203, D205, E212, D242, N244, D246, K248, E253, D278, N280, D282, K284, and E289 each coordinate Ca(2+). Residues 312-315 (HDEF) carry the Prevents secretion from ER motif.

The protein belongs to the CREC family. Interacts with ggcx.

The protein resides in the endoplasmic reticulum membrane. Its subcellular location is the golgi apparatus. It localises to the secreted. It is found in the melanosome. The protein localises to the sarcoplasmic reticulum lumen. Functionally, involved in regulation of vitamin K-dependent carboxylation of multiple N-terminal glutamate residues. Seems to inhibit gamma-carboxylase ggcx. Binds 7 calcium ions with a low affinity. This is Calumenin (calu) from Xenopus tropicalis (Western clawed frog).